A 337-amino-acid chain; its full sequence is Ferredoxin--NADP reductase (337 aa).

Positions 35, 43, 48, 88, 122, 289, and 330 each coordinate FAD.

Belongs to the ferredoxin--NADP reductase type 2 family. As to quaternary structure, homodimer. Requires FAD as cofactor.

It catalyses the reaction 2 reduced [2Fe-2S]-[ferredoxin] + NADP(+) + H(+) = 2 oxidized [2Fe-2S]-[ferredoxin] + NADPH. This is Ferredoxin--NADP reductase from Ehrlichia ruminantium (strain Welgevonden).